A 245-amino-acid chain; its full sequence is Ribosomal RNA large subunit methyltransferase E (245 aa).

S-adenosyl-L-methionine-binding residues include Gly-83, Trp-85, Asp-111, Asp-127, and Asp-156. Lys-196 (proton acceptor) is an active-site residue.

This sequence belongs to the class I-like SAM-binding methyltransferase superfamily. RNA methyltransferase RlmE family.

The protein localises to the cytoplasm. It carries out the reaction uridine(2552) in 23S rRNA + S-adenosyl-L-methionine = 2'-O-methyluridine(2552) in 23S rRNA + S-adenosyl-L-homocysteine + H(+). Functionally, specifically methylates the uridine in position 2552 of 23S rRNA at the 2'-O position of the ribose in the fully assembled 50S ribosomal subunit. This chain is Ribosomal RNA large subunit methyltransferase E, found in Polaromonas naphthalenivorans (strain CJ2).